The primary structure comprises 131 residues: Large ribosomal subunit protein bL17 (131 aa).

Belongs to the bacterial ribosomal protein bL17 family. Part of the 50S ribosomal subunit. Contacts protein L32.

The sequence is that of Large ribosomal subunit protein bL17 from Shewanella oneidensis (strain ATCC 700550 / JCM 31522 / CIP 106686 / LMG 19005 / NCIMB 14063 / MR-1).